A 1028-amino-acid chain; its full sequence is U2 snRNP-associated SURP motif-containing protein (1028 aa).

2 disordered regions span residues M1–K111 and V141–T272. N-acetylalanine is present on A2. The segment covering G7–T16 has biased composition (polar residues). Over residues T45–N54 the composition is skewed to basic residues. A compositionally biased stretch (basic and acidic residues) spans Y55–L64. Position 67 is a phosphoserine (S67). K80 participates in a covalent cross-link: Glycyl lysine isopeptide (Lys-Gly) (interchain with G-Cter in SUMO2). Residues A92–L121 adopt a coiled-coil conformation. Composition is skewed to basic and acidic residues over residues S97–K111 and A144–G155. Glycyl lysine isopeptide (Lys-Gly) (interchain with G-Cter in SUMO2) cross-links involve residues K145 and K168. Over residues N169–R178 the composition is skewed to polar residues. Residues E186–H222 are compositionally biased toward basic and acidic residues. The stretch at L192–E232 forms a coiled coil. Residue S202 is modified to Phosphoserine. K208 participates in a covalent cross-link: Glycyl lysine isopeptide (Lys-Gly) (interchain with G-Cter in SUMO2). Residue S236 is modified to Phosphoserine. Residues D239 to S249 are compositionally biased toward basic and acidic residues. The region spanning T273 to A354 is the RRM domain. The stretch at L429–Y472 is one SURP motif repeat. Position 484 is a phosphoserine (S484). A CID domain is found at L533–V678. T718 carries the phosphothreonine modification. Glycyl lysine isopeptide (Lys-Gly) (interchain with G-Cter in SUMO2) cross-links involve residues K747 and K748. K759 is subject to N6-acetyllysine; alternate. K759 participates in a covalent cross-link: Glycyl lysine isopeptide (Lys-Gly) (interchain with G-Cter in SUMO2); alternate. Disordered regions lie at residues K777–R840 and Q854–H1028. Residues E779–K809 are a coiled coil. Residues E785–T805 show a composition bias toward acidic residues. Residues S787, S799, and S810 each carry the phosphoserine modification. Composition is skewed to basic and acidic residues over residues K809–R840 and Q873–R921. Residues K821, K828, and K831 each participate in a glycyl lysine isopeptide (Lys-Gly) (interchain with G-Cter in SUMO2) cross-link. Positions S836–K914 form a coiled coil. A Phosphothreonine modification is found at T930. S945 and S947 each carry phosphoserine. The span at K949–K979 shows a compositional bias: basic and acidic residues. Positions T990 to H1028 are enriched in basic residues.

Belongs to the splicing factor SR family. In terms of assembly, interacts with ERBB4.

Its subcellular location is the nucleus. The chain is U2 snRNP-associated SURP motif-containing protein (U2SURP) from Pongo abelii (Sumatran orangutan).